The primary structure comprises 311 residues: uncharacterized protein (311 aa).

A run of 9 helical transmembrane segments spans residues 11-31, 34-54, 72-92, 101-121, 147-167, 198-218, 233-253, 257-277, and 279-299; these read LDNW…GYLS, VGIV…FLSL, LAIS…LFGI, HVIV…FVAQ, IEGI…WYLM, WFGV…FALS, GFIA…SIVI, FALA…TYLL, and TIPF…NVGP.

The protein resides in the cell membrane. This is an uncharacterized protein from Mycoplasma pneumoniae (strain ATCC 29342 / M129 / Subtype 1) (Mycoplasmoides pneumoniae).